A 523-amino-acid chain; its full sequence is 2-isopropylmalate synthase (523 aa).

Positions 5–267 (VIIFDTTLRD…HTAINHQEIW (263 aa)) constitute a Pyruvate carboxyltransferase domain. Mn(2+) contacts are provided by D14, H202, H204, and N238. The regulatory domain stretch occupies residues 392–523 (RLDYFSVQSG…QHNENNKETV (132 aa)).

It belongs to the alpha-IPM synthase/homocitrate synthase family. LeuA type 1 subfamily. As to quaternary structure, homodimer. Requires Mn(2+) as cofactor.

It is found in the cytoplasm. It catalyses the reaction 3-methyl-2-oxobutanoate + acetyl-CoA + H2O = (2S)-2-isopropylmalate + CoA + H(+). It participates in amino-acid biosynthesis; L-leucine biosynthesis; L-leucine from 3-methyl-2-oxobutanoate: step 1/4. Catalyzes the condensation of the acetyl group of acetyl-CoA with 3-methyl-2-oxobutanoate (2-ketoisovalerate) to form 3-carboxy-3-hydroxy-4-methylpentanoate (2-isopropylmalate). The polypeptide is 2-isopropylmalate synthase (Escherichia coli (strain K12 / MC4100 / BW2952)).